A 299-amino-acid polypeptide reads, in one-letter code: MSTGIETAGVPDAVIPELVIISGMSGAGRSTAAKCLEDLGWFVVDNLPPALIPTMVELGARSQGNVARIAVVVDVRGRRFFDNLRESLADLESKNVTRRIVFLESSDEALVRRFESVRRPHPLQGDGRIVDGIDAERELLRELRGDADLVIDTSSLNVHELRAKMDAQFAGDEEPELRATVMSFGFKYGLPVDADLVVDMRFLPNPHWVPELRPFTGLNEEVSAYVFNQPGAKEFLDRYAELLRLIAAGYRREGKRYVTIAVGCTGGKHRSVATSEKLAARLAAEGVETVVVHRDMGRE.

Residue 23-30 (GMSGAGRS) coordinates ATP. 74–77 (DVRG) contacts GTP.

It belongs to the RapZ-like family.

Its function is as follows. Displays ATPase and GTPase activities. This Streptomyces avermitilis (strain ATCC 31267 / DSM 46492 / JCM 5070 / NBRC 14893 / NCIMB 12804 / NRRL 8165 / MA-4680) protein is Nucleotide-binding protein SAV_6292.